The sequence spans 180 residues: ATP synthase subunit delta, chloroplastic (180 aa).

It belongs to the ATPase delta chain family. In terms of assembly, F-type ATPases have 2 components, F(1) - the catalytic core - and F(0) - the membrane proton channel. F(1) has five subunits: alpha(3), beta(3), gamma(1), delta(1), epsilon(1). CF(0) has four main subunits: a(1), b(1), b'(1) and c(10-14). The alpha and beta chains form an alternating ring which encloses part of the gamma chain. F(1) is attached to F(0) by a central stalk formed by the gamma and epsilon chains, while a peripheral stalk is formed by the delta, b and b' chains.

Its subcellular location is the plastid. It is found in the chloroplast thylakoid membrane. In terms of biological role, f(1)F(0) ATP synthase produces ATP from ADP in the presence of a proton or sodium gradient. F-type ATPases consist of two structural domains, F(1) containing the extramembraneous catalytic core and F(0) containing the membrane proton channel, linked together by a central stalk and a peripheral stalk. During catalysis, ATP synthesis in the catalytic domain of F(1) is coupled via a rotary mechanism of the central stalk subunits to proton translocation. Functionally, this protein is part of the stalk that links CF(0) to CF(1). It either transmits conformational changes from CF(0) to CF(1) or is implicated in proton conduction. The protein is ATP synthase subunit delta, chloroplastic of Emiliania huxleyi (Coccolithophore).